Consider the following 109-residue polypeptide: Iron-sulfur cluster assembly protein CyaY (109 aa).

The protein belongs to the frataxin family.

Its function is as follows. Involved in iron-sulfur (Fe-S) cluster assembly. May act as a regulator of Fe-S biogenesis. The sequence is that of Iron-sulfur cluster assembly protein CyaY from Shewanella putrefaciens (strain CN-32 / ATCC BAA-453).